We begin with the raw amino-acid sequence, 491 residues long: Phosphoethanolamine N-methyltransferase 1 (491 aa).

An N-acetylalanine modification is found at Ala2. 6 residues coordinate S-adenosyl-L-homocysteine: Gly61, Arg66, Asp82, Asp107, Val108, and Asn126. Phosphocholine-binding residues include Ser159, Ser164, Gly165, Arg169, and Tyr176. N-methylethanolamine phosphate is bound by residues 245-246 (QY) and Tyr254. Tyr254 contacts phosphocholine. Val263, Ser264, Gly290, Asp312, Asp338, Cys339, and Arg355 together coordinate S-adenosyl-L-homocysteine. Positions 386, 400, 404, 406, and 472 each coordinate phosphocholine. Residues Tyr386, Tyr400, 404 to 406 (RGY), and Lys472 contribute to the N-methylethanolamine phosphate site.

This sequence belongs to the class I-like SAM-binding methyltransferase superfamily. PEAMT family. In terms of tissue distribution, highly expressed in the meristem and elongation zones of the root. Expressed in differentiated root epidermal cells. Highly expressed in leaf vasculature.

The protein localises to the cytoplasm. The enzyme catalyses phosphoethanolamine + S-adenosyl-L-methionine = N-methylethanolamine phosphate + S-adenosyl-L-homocysteine + H(+). It catalyses the reaction N-methylethanolamine phosphate + S-adenosyl-L-methionine = N,N-dimethylethanolamine phosphate + S-adenosyl-L-homocysteine + H(+). It carries out the reaction N,N-dimethylethanolamine phosphate + S-adenosyl-L-methionine = phosphocholine + S-adenosyl-L-homocysteine + H(+). It functions in the pathway phospholipid metabolism; phosphatidylcholine biosynthesis; phosphocholine from phosphoethanolamine: step 1/1. Its function is as follows. Involved in phosphocholine biosynthesis. Catalyzes the N-methylation of phosphoethanolamine, phosphomonomethylethanolamine and phosphodimethylethanolamine, the three methylation steps required to convert phosphoethanolamine to phosphocholine (PC). Required for root system development and epidermal cell integrity through its role in choline and phospholipid metabolism. In association with NMT3, regulates PC homeostasis, phase transition at the shoot apex, coordinated organ development, and fertility. In association with NMT3, involved in phosphatidylcholine biosynthesis and vascular development. In association with NMT2, involved in the production of phosphatidylcholine in roots, essential for root development. In association with NMT2 produce phosphocholine mainly for leaf growth maintenance. Contributes to the regulation of overall root zonation dynamics through reactive oxygen species (ROS) and auxin-regulated cell differentiation. Participates in root development of primary root elongation under salt stress conditions by balancing reactive oxygen species (ROS) production and distribution through abscisic acid (ABA) signaling. The chain is Phosphoethanolamine N-methyltransferase 1 from Arabidopsis thaliana (Mouse-ear cress).